Here is a 388-residue protein sequence, read N- to C-terminus: Chorismate synthase (388 aa).

R39 and R45 together coordinate NADP(+). FMN is bound by residues 130 to 132 (RSS), 251 to 252 (NA), G296, 311 to 315 (KPIPT), and R337.

The protein belongs to the chorismate synthase family. In terms of assembly, homotetramer. The cofactor is FMNH2.

The catalysed reaction is 5-O-(1-carboxyvinyl)-3-phosphoshikimate = chorismate + phosphate. Its pathway is metabolic intermediate biosynthesis; chorismate biosynthesis; chorismate from D-erythrose 4-phosphate and phosphoenolpyruvate: step 7/7. In terms of biological role, catalyzes the anti-1,4-elimination of the C-3 phosphate and the C-6 proR hydrogen from 5-enolpyruvylshikimate-3-phosphate (EPSP) to yield chorismate, which is the branch point compound that serves as the starting substrate for the three terminal pathways of aromatic amino acid biosynthesis. This reaction introduces a second double bond into the aromatic ring system. This chain is Chorismate synthase, found in Lactococcus lactis subsp. cremoris (strain MG1363).